Consider the following 307-residue polypeptide: Elongation factor Ts (307 aa).

Positions 80-83 are involved in Mg(2+) ion dislocation from EF-Tu; it reads TDFV.

This sequence belongs to the EF-Ts family.

It localises to the cytoplasm. Functionally, associates with the EF-Tu.GDP complex and induces the exchange of GDP to GTP. It remains bound to the aminoacyl-tRNA.EF-Tu.GTP complex up to the GTP hydrolysis stage on the ribosome. In Azorhizobium caulinodans (strain ATCC 43989 / DSM 5975 / JCM 20966 / LMG 6465 / NBRC 14845 / NCIMB 13405 / ORS 571), this protein is Elongation factor Ts.